Here is a 233-residue protein sequence, read N- to C-terminus: Phosphoribosylformylglycinamidine synthase subunit PurQ (233 aa).

Residues 3–233 (SAVLVFPGIN…GLVAHLERAA (231 aa)) enclose the Glutamine amidotransferase type-1 domain. Cys-87 acts as the Nucleophile in catalysis. Residues His-204 and Glu-206 contribute to the active site.

As to quaternary structure, part of the FGAM synthase complex composed of 1 PurL, 1 PurQ and 2 PurS subunits.

The protein localises to the cytoplasm. The catalysed reaction is N(2)-formyl-N(1)-(5-phospho-beta-D-ribosyl)glycinamide + L-glutamine + ATP + H2O = 2-formamido-N(1)-(5-O-phospho-beta-D-ribosyl)acetamidine + L-glutamate + ADP + phosphate + H(+). It catalyses the reaction L-glutamine + H2O = L-glutamate + NH4(+). It functions in the pathway purine metabolism; IMP biosynthesis via de novo pathway; 5-amino-1-(5-phospho-D-ribosyl)imidazole from N(2)-formyl-N(1)-(5-phospho-D-ribosyl)glycinamide: step 1/2. Its function is as follows. Part of the phosphoribosylformylglycinamidine synthase complex involved in the purines biosynthetic pathway. Catalyzes the ATP-dependent conversion of formylglycinamide ribonucleotide (FGAR) and glutamine to yield formylglycinamidine ribonucleotide (FGAM) and glutamate. The FGAM synthase complex is composed of three subunits. PurQ produces an ammonia molecule by converting glutamine to glutamate. PurL transfers the ammonia molecule to FGAR to form FGAM in an ATP-dependent manner. PurS interacts with PurQ and PurL and is thought to assist in the transfer of the ammonia molecule from PurQ to PurL. This Nitrobacter winogradskyi (strain ATCC 25391 / DSM 10237 / CIP 104748 / NCIMB 11846 / Nb-255) protein is Phosphoribosylformylglycinamidine synthase subunit PurQ.